An 81-amino-acid polypeptide reads, in one-letter code: Conotoxin Im6.1 (81 aa).

An N-terminal signal peptide occupies residues 1-20 (MSKLGVVLFTLLLLVPLVTP). A propeptide spanning residues 21–47 (ERDGGKWTMLAKNKKAMKRNLMDFITR) is cleaved from the precursor. 3 disulfides stabilise this stretch: Cys-49–Cys-61, Cys-54–Cys-67, and Cys-60–Cys-76.

The protein belongs to the conotoxin M superfamily. In terms of tissue distribution, expressed by the venom duct.

The protein resides in the secreted. This Conus imperialis (Imperial cone) protein is Conotoxin Im6.1.